The sequence spans 334 residues: Small ribosomal subunit protein RACK1z (334 aa).

WD repeat units follow at residues Gly-16–Asp-47, Gly-73–Asp-103, Gly-115–Asn-145, Gly-163–Asn-195, Gly-207–Asp-237, Asp-248–Asp-277, and Asn-296–Lys-326.

The protein belongs to the WD repeat G protein beta family. Ribosomal protein RACK1 subfamily. As to quaternary structure, interacts with RAC1, RAC3, RAC6, RAR1, SGT1 and RBOHB. Homodimer and heterodimer with RACK1B. In terms of tissue distribution, widely expressed.

Its subcellular location is the cytoplasm. The protein localises to the cell membrane. Its function is as follows. Component of the RACK1 regulatory proteins that functions in innate immunity by interacting with multiple proteins in the RAC1 immune complex. Acts as a positive regulator of reactive oxygen species (ROS) production and is required for resistance against rice blast (M.grisea) infection. This Oryza sativa subsp. japonica (Rice) protein is Small ribosomal subunit protein RACK1z (RACK1A).